The sequence spans 471 residues: 7-hydroxymethyl chlorophyll a reductase, chloroplastic (471 aa).

Residues 1–44 constitute a chloroplast transit peptide; it reads MARCISFLSTSSSLPCATKPPCCSVSSVLPSSPSSHQCRGRKTS.

It belongs to the FrhB family. Requires FAD as cofactor. The cofactor is iron-sulfur cluster.

The protein localises to the plastid. It is found in the chloroplast. The catalysed reaction is chlorophyll a + 2 oxidized [2Fe-2S]-[ferredoxin] + H2O = 7(1)-hydroxychlorophyll a + 2 reduced [2Fe-2S]-[ferredoxin] + 2 H(+). Functionally, probable iron-sulfur flavoprotein that converts 7-hydroxymethyl chlorophyll a to chlorophyll a using ferredoxin as a reducing equivalent. Catalyzes the reduction of a hydroxymethyl group to a methyl group. This Oryza sativa subsp. japonica (Rice) protein is 7-hydroxymethyl chlorophyll a reductase, chloroplastic (HCAR).